A 91-amino-acid polypeptide reads, in one-letter code: UPF0728 protein v1g117062 (91 aa).

Belongs to the UPF0728 family.

The polypeptide is UPF0728 protein v1g117062 (Nematostella vectensis (Starlet sea anemone)).